The sequence spans 223 residues: Translation initiation factor 6 (223 aa).

Belongs to the eIF-6 family.

In terms of biological role, binds to the 50S ribosomal subunit and prevents its association with the 30S ribosomal subunit to form the 70S initiation complex. The sequence is that of Translation initiation factor 6 from Saccharolobus islandicus (strain M.16.27) (Sulfolobus islandicus).